The following is a 201-amino-acid chain: 3-isopropylmalate dehydratase small subunit (201 aa).

It belongs to the LeuD family. LeuD type 1 subfamily. As to quaternary structure, heterodimer of LeuC and LeuD.

The enzyme catalyses (2R,3S)-3-isopropylmalate = (2S)-2-isopropylmalate. The protein operates within amino-acid biosynthesis; L-leucine biosynthesis; L-leucine from 3-methyl-2-oxobutanoate: step 2/4. Functionally, catalyzes the isomerization between 2-isopropylmalate and 3-isopropylmalate, via the formation of 2-isopropylmaleate. The sequence is that of 3-isopropylmalate dehydratase small subunit from Salmonella schwarzengrund (strain CVM19633).